The following is a 629-amino-acid chain: tRNA uridine 5-carboxymethylaminomethyl modification enzyme MnmG (629 aa).

13–18 serves as a coordination point for FAD; it reads GGGHAG. 273–287 is a binding site for NAD(+); it reads GPRYCPSIEDKIHRF.

Belongs to the MnmG family. Homodimer. Heterotetramer of two MnmE and two MnmG subunits. Requires FAD as cofactor.

The protein localises to the cytoplasm. Its function is as follows. NAD-binding protein involved in the addition of a carboxymethylaminomethyl (cmnm) group at the wobble position (U34) of certain tRNAs, forming tRNA-cmnm(5)s(2)U34. The polypeptide is tRNA uridine 5-carboxymethylaminomethyl modification enzyme MnmG (Shewanella baltica (strain OS223)).